A 326-amino-acid chain; its full sequence is Malate dehydrogenase (326 aa).

Residue 11-17 (GAAGQIG) participates in NAD(+) binding. Residues arginine 92 and arginine 98 each contribute to the substrate site. Residues asparagine 105, glutamine 112, and 129-131 (VGN) contribute to the NAD(+) site. Substrate-binding residues include asparagine 131 and arginine 162. Residue histidine 187 is the Proton acceptor of the active site.

The protein belongs to the LDH/MDH superfamily. MDH type 2 family.

It carries out the reaction (S)-malate + NAD(+) = oxaloacetate + NADH + H(+). Catalyzes the reversible oxidation of malate to oxaloacetate. This chain is Malate dehydrogenase, found in Leptospira borgpetersenii serovar Hardjo-bovis (strain JB197).